The following is a 159-amino-acid chain: Nucleoside diphosphate kinase (159 aa).

ATP is bound by residues K14, F62, R90, T96, and R107. H123 acts as the Pros-phosphohistidine intermediate in catalysis.

This sequence belongs to the NDK family. Mg(2+) is required as a cofactor.

The protein resides in the cytoplasm. It catalyses the reaction a 2'-deoxyribonucleoside 5'-diphosphate + ATP = a 2'-deoxyribonucleoside 5'-triphosphate + ADP. The enzyme catalyses a ribonucleoside 5'-diphosphate + ATP = a ribonucleoside 5'-triphosphate + ADP. In terms of biological role, major role in the synthesis of nucleoside triphosphates other than ATP. The ATP gamma phosphate is transferred to the NDP beta phosphate via a ping-pong mechanism, using a phosphorylated active-site intermediate. The sequence is that of Nucleoside diphosphate kinase from Pyrococcus abyssi (strain GE5 / Orsay).